The sequence spans 282 residues: Phosphatidylglycerol--prolipoprotein diacylglyceryl transferase (282 aa).

Transmembrane regions (helical) follow at residues Ile-23 to Trp-43, Phe-71 to Tyr-91, Ile-106 to Ile-126, and Gly-132 to Phe-152. An a 1,2-diacyl-sn-glycero-3-phospho-(1'-sn-glycerol)-binding site is contributed by Arg-154. 3 consecutive transmembrane segments (helical) span residues Leu-189–Gly-209, Gly-217–Phe-237, and Trp-252–Leu-272.

Belongs to the Lgt family.

Its subcellular location is the cell inner membrane. It catalyses the reaction L-cysteinyl-[prolipoprotein] + a 1,2-diacyl-sn-glycero-3-phospho-(1'-sn-glycerol) = an S-1,2-diacyl-sn-glyceryl-L-cysteinyl-[prolipoprotein] + sn-glycerol 1-phosphate + H(+). It functions in the pathway protein modification; lipoprotein biosynthesis (diacylglyceryl transfer). Functionally, catalyzes the transfer of the diacylglyceryl group from phosphatidylglycerol to the sulfhydryl group of the N-terminal cysteine of a prolipoprotein, the first step in the formation of mature lipoproteins. The sequence is that of Phosphatidylglycerol--prolipoprotein diacylglyceryl transferase from Rhizobium leguminosarum bv. trifolii (strain WSM2304).